Consider the following 88-residue polypeptide: Small ribosomal subunit protein bS18B (88 aa).

Belongs to the bacterial ribosomal protein bS18 family. Part of the 30S ribosomal subunit. Forms a tight heterodimer with protein bS6.

In terms of biological role, binds as a heterodimer with protein bS6 to the central domain of the 16S rRNA, where it helps stabilize the platform of the 30S subunit. This chain is Small ribosomal subunit protein bS18B, found in Mycolicibacterium paratuberculosis (strain ATCC BAA-968 / K-10) (Mycobacterium paratuberculosis).